Reading from the N-terminus, the 252-residue chain is Uridylate kinase (252 aa).

20–23 (KLSG) contributes to the ATP binding site. Residues 28-33 (GGGGLG) form an involved in allosteric activation by GTP region. Gly-62 contacts UMP. ATP contacts are provided by Gly-63 and Arg-67. UMP-binding positions include Asp-82 and 143-150 (MGMPYFST). Residues Asn-171, Tyr-177, and Asp-180 each contribute to the ATP site.

This sequence belongs to the UMP kinase family. In terms of assembly, homohexamer.

It localises to the cytoplasm. It carries out the reaction UMP + ATP = UDP + ADP. The protein operates within pyrimidine metabolism; CTP biosynthesis via de novo pathway; UDP from UMP (UMPK route): step 1/1. Its activity is regulated as follows. Allosterically activated by GTP. Inhibited by UTP. Its function is as follows. Catalyzes the reversible phosphorylation of UMP to UDP. In Streptomyces avermitilis (strain ATCC 31267 / DSM 46492 / JCM 5070 / NBRC 14893 / NCIMB 12804 / NRRL 8165 / MA-4680), this protein is Uridylate kinase.